A 29-amino-acid chain; its full sequence is L-serine dehydratase, beta chain (29 aa).

The protein belongs to the iron-sulfur dependent L-serine dehydratase family. Heterodimer of an alpha chain and a beta chain. Requires [4Fe-4S] cluster as cofactor.

The catalysed reaction is L-serine = pyruvate + NH4(+). It functions in the pathway carbohydrate biosynthesis; gluconeogenesis. This chain is L-serine dehydratase, beta chain, found in Anaerotignum propionicum (Clostridium propionicum).